We begin with the raw amino-acid sequence, 101 residues long: Small ribosomal subunit protein uS14 (101 aa).

It belongs to the universal ribosomal protein uS14 family. As to quaternary structure, part of the 30S ribosomal subunit. Contacts proteins S3 and S10.

In terms of biological role, binds 16S rRNA, required for the assembly of 30S particles and may also be responsible for determining the conformation of the 16S rRNA at the A site. The polypeptide is Small ribosomal subunit protein uS14 (Alcanivorax borkumensis (strain ATCC 700651 / DSM 11573 / NCIMB 13689 / SK2)).